A 238-amino-acid chain; its full sequence is tRNA1(Val) (adenine(37)-N6)-methyltransferase (238 aa).

It belongs to the methyltransferase superfamily. tRNA (adenine-N(6)-)-methyltransferase family.

The protein resides in the cytoplasm. It catalyses the reaction adenosine(37) in tRNA1(Val) + S-adenosyl-L-methionine = N(6)-methyladenosine(37) in tRNA1(Val) + S-adenosyl-L-homocysteine + H(+). Its function is as follows. Specifically methylates the adenine in position 37 of tRNA(1)(Val) (anticodon cmo5UAC). The protein is tRNA1(Val) (adenine(37)-N6)-methyltransferase of Shewanella baltica (strain OS195).